The sequence spans 225 residues: 2-C-methyl-D-erythritol 4-phosphate cytidylyltransferase (225 aa).

The protein belongs to the IspD/TarI cytidylyltransferase family. IspD subfamily.

The enzyme catalyses 2-C-methyl-D-erythritol 4-phosphate + CTP + H(+) = 4-CDP-2-C-methyl-D-erythritol + diphosphate. The protein operates within isoprenoid biosynthesis; isopentenyl diphosphate biosynthesis via DXP pathway; isopentenyl diphosphate from 1-deoxy-D-xylulose 5-phosphate: step 2/6. In terms of biological role, catalyzes the formation of 4-diphosphocytidyl-2-C-methyl-D-erythritol from CTP and 2-C-methyl-D-erythritol 4-phosphate (MEP). This Haemophilus influenzae (strain PittGG) protein is 2-C-methyl-D-erythritol 4-phosphate cytidylyltransferase.